The sequence spans 284 residues: L-ribulose-5-phosphate 3-epimerase UlaE (284 aa).

Belongs to the L-ribulose-5-phosphate 3-epimerase family.

It catalyses the reaction L-ribulose 5-phosphate = L-xylulose 5-phosphate. Its pathway is cofactor degradation; L-ascorbate degradation; D-xylulose 5-phosphate from L-ascorbate: step 3/4. In terms of biological role, catalyzes the isomerization of L-xylulose-5-phosphate to L-ribulose-5-phosphate. Is involved in the anaerobic L-ascorbate utilization. This Escherichia coli O127:H6 (strain E2348/69 / EPEC) protein is L-ribulose-5-phosphate 3-epimerase UlaE.